The chain runs to 588 residues: MIQHPRIGIRPTIDGRRQGVRESLEVQTMNMAKSVADLISSTLKYPDGEPVECVISPSTIGRVPEAAASHELFKKSNVCATITVTPCWCYGSETMDMSPDIPHAIWGFNGTERPGAVYLAAVLASHAQKGIPAFGIYGRDVQEASDTAIPEDVKEKLLRYARAALATGLMRDTAYLSMGSVSMGIGGSIVNPDFFQEYLGMRNESVDMTEFTRRMDRGIYDPEEFERAMVWVKEHIKEGVDRNREDLILSKEEKEKQWEFVIKMFMIGRDLMVGNPRLAELGFEEEAVGHHALVAGFQGQRQWTDHFPNGDFMETFLNTQFDWNGIRKPFVFATENDSLNGVSMLFNYLLTNTPQIFADVRTYWSPEAVKRVTGHTLEGCAAAGFLHLINSGSCTLDGTGQATRDGKPVMKPFWELDESEVQAMLENTDFPPANREYFRGGGFSTRFLTKGDMPVTMVRLNLLKGVGPVLQIAEGYTLELPEDVHHTLDNRTDPGWPTTWFAPRLTGKGAFKSVYDVMNNWGANHGAITYGHIGADLITLASMLRIPVNMHNVPEEDIFRPKNWSLFGTEDLESADYRACQLLGPLHK.

Residues E335 and D359 each act as proton acceptor in the active site. Positions 335, 359, and 525 each coordinate Mn(2+).

It belongs to the L-fucose isomerase family. The cofactor is Mn(2+).

The protein localises to the cytoplasm. It catalyses the reaction L-fucose = L-fuculose. The protein operates within carbohydrate degradation; L-fucose degradation; L-lactaldehyde and glycerone phosphate from L-fucose: step 1/3. In terms of biological role, converts the aldose L-fucose into the corresponding ketose L-fuculose. The polypeptide is L-fucose isomerase (Streptococcus pneumoniae (strain Taiwan19F-14)).